Consider the following 430-residue polypeptide: Tol-Pal system protein TolB (430 aa).

The first 21 residues, 1–21 (MKQAFRVALSVLMLFVAVAHA), serve as a signal peptide directing secretion.

The protein belongs to the TolB family. In terms of assembly, the Tol-Pal system is composed of five core proteins: the inner membrane proteins TolA, TolQ and TolR, the periplasmic protein TolB and the outer membrane protein Pal. They form a network linking the inner and outer membranes and the peptidoglycan layer.

It is found in the periplasm. Its function is as follows. Part of the Tol-Pal system, which plays a role in outer membrane invagination during cell division and is important for maintaining outer membrane integrity. TolB occupies a key intermediary position in the Tol-Pal system because it communicates directly with both membrane-embedded components, Pal in the outer membrane and TolA in the inner membrane. The sequence is that of Tol-Pal system protein TolB from Erwinia tasmaniensis (strain DSM 17950 / CFBP 7177 / CIP 109463 / NCPPB 4357 / Et1/99).